We begin with the raw amino-acid sequence, 105 residues long: Large ribosomal subunit protein uL24 (105 aa).

This sequence belongs to the universal ribosomal protein uL24 family. As to quaternary structure, part of the 50S ribosomal subunit.

In terms of biological role, one of two assembly initiator proteins, it binds directly to the 5'-end of the 23S rRNA, where it nucleates assembly of the 50S subunit. Functionally, one of the proteins that surrounds the polypeptide exit tunnel on the outside of the subunit. The chain is Large ribosomal subunit protein uL24 from Cellvibrio japonicus (strain Ueda107) (Pseudomonas fluorescens subsp. cellulosa).